A 140-amino-acid polypeptide reads, in one-letter code: MSSKKKQKMKRSSSTQVQALAQHISMSAHKARRVVDQIRGRSYAETLMLLELMPYRASYPIFKLVYSAAANASHNKSFNEADSFISKAEVNGGTIVKKFKPRAKGRSYPIKRPTCHITIVLKDRSKKKTDQDMFLGTKNV.

It belongs to the universal ribosomal protein uL22 family. Part of the 50S ribosomal subunit.

The protein resides in the plastid. It localises to the chloroplast. Its function is as follows. This protein binds specifically to 23S rRNA. Functionally, the globular domain of the protein is located near the polypeptide exit tunnel on the outside of the subunit, while an extended beta-hairpin is found that lines the wall of the exit tunnel in the center of the 70S ribosome. This is Large ribosomal subunit protein uL22c (rpl22) from Calycanthus floridus var. glaucus (Eastern sweetshrub).